A 174-amino-acid polypeptide reads, in one-letter code: Shikimate kinase 2 (174 aa).

12–17 contributes to the ATP binding site; sequence GCGKTT. Thr16 and Asp32 together coordinate Mg(2+). Asp34, Arg58, and Gly79 together coordinate substrate. The tract at residues 112–126 is LID domain; sequence QAAPEEDLRPTLTGK. Arg120 lines the ATP pocket. Arg139 is a substrate binding site.

This sequence belongs to the shikimate kinase family. AroL subfamily. As to quaternary structure, monomer. Mg(2+) is required as a cofactor.

It localises to the cytoplasm. The enzyme catalyses shikimate + ATP = 3-phosphoshikimate + ADP + H(+). It participates in metabolic intermediate biosynthesis; chorismate biosynthesis; chorismate from D-erythrose 4-phosphate and phosphoenolpyruvate: step 5/7. Catalyzes the specific phosphorylation of the 3-hydroxyl group of shikimic acid using ATP as a cosubstrate. The chain is Shikimate kinase 2 from Shigella dysenteriae serotype 1 (strain Sd197).